The chain runs to 419 residues: MSRYVFTSESVTEGHPDKICDQVSDAVLDALLAQDSSSRVACETVVNTGLCMITGEVTSKAQVDFIHLVRDVIREIGYSGARAGGFDANSCAVLVALDQQSPDIAQGVDEADDHEGDPLDKVGAGDQGIMFGYACNETPELMPLPISLAHRLSRRLAEVRHNGTLDYLLPDGKTQVSVVYENDKPVAIDTILISTQHTAEVAGLSDEQQVRERISDDLWTHVVEPATADLPLKPSKDSTRYLVNPTGKFVVGGPQGDAGLTGRKIIVDTYGGYARHGGGAFSGKDPTKVDRSAAYAARYVAKCLVAAGLAQRAEVQLSYAIGVAKPVSILVESFGTGKVSNAELTELVQQHFDLRPGAIIQQFKLREMPALSGGRFYRDTAAYGHFGRPDLKLPWEDVENKASTLLQAEASRLQQGNTL.

Residue histidine 15 coordinates ATP. Aspartate 17 contributes to the Mg(2+) binding site. Glutamate 43 is a K(+) binding site. L-methionine is bound by residues glutamate 56 and glutamine 100. A flexible loop region spans residues glutamine 100 to glutamate 110. ATP is bound by residues aspartate 171–lysine 173, lysine 248–phenylalanine 249, aspartate 257, arginine 263–lysine 264, alanine 280, and lysine 284. L-methionine is bound at residue aspartate 257. An L-methionine-binding site is contributed by lysine 288.

Belongs to the AdoMet synthase family. Homotetramer; dimer of dimers. The cofactor is Mg(2+). K(+) is required as a cofactor.

The protein resides in the cytoplasm. It carries out the reaction L-methionine + ATP + H2O = S-adenosyl-L-methionine + phosphate + diphosphate. The protein operates within amino-acid biosynthesis; S-adenosyl-L-methionine biosynthesis; S-adenosyl-L-methionine from L-methionine: step 1/1. Catalyzes the formation of S-adenosylmethionine (AdoMet) from methionine and ATP. The overall synthetic reaction is composed of two sequential steps, AdoMet formation and the subsequent tripolyphosphate hydrolysis which occurs prior to release of AdoMet from the enzyme. This Synechococcus sp. (strain WH7803) protein is S-adenosylmethionine synthase.